The sequence spans 366 residues: NADH-quinone oxidoreductase subunit D (366 aa).

The protein belongs to the complex I 49 kDa subunit family. In terms of assembly, NDH-1 is composed of 14 different subunits. Subunits NuoB, C, D, E, F, and G constitute the peripheral sector of the complex.

The protein localises to the cell membrane. The catalysed reaction is a quinone + NADH + 5 H(+)(in) = a quinol + NAD(+) + 4 H(+)(out). NDH-1 shuttles electrons from NADH, via FMN and iron-sulfur (Fe-S) centers, to quinones in the respiratory chain. The immediate electron acceptor for the enzyme in this species is believed to be a menaquinone. Couples the redox reaction to proton translocation (for every two electrons transferred, four hydrogen ions are translocated across the cytoplasmic membrane), and thus conserves the redox energy in a proton gradient. The polypeptide is NADH-quinone oxidoreductase subunit D (Bacillus cytotoxicus (strain DSM 22905 / CIP 110041 / 391-98 / NVH 391-98)).